A 262-amino-acid polypeptide reads, in one-letter code: Acyl-[acyl-carrier-protein]--UDP-N-acetylglucosamine O-acyltransferase (262 aa).

It belongs to the transferase hexapeptide repeat family. LpxA subfamily. As to quaternary structure, homotrimer.

The protein resides in the cytoplasm. The enzyme catalyses a (3R)-hydroxyacyl-[ACP] + UDP-N-acetyl-alpha-D-glucosamine = a UDP-3-O-[(3R)-3-hydroxyacyl]-N-acetyl-alpha-D-glucosamine + holo-[ACP]. The protein operates within glycolipid biosynthesis; lipid IV(A) biosynthesis; lipid IV(A) from (3R)-3-hydroxytetradecanoyl-[acyl-carrier-protein] and UDP-N-acetyl-alpha-D-glucosamine: step 1/6. Functionally, involved in the biosynthesis of lipid A, a phosphorylated glycolipid that anchors the lipopolysaccharide to the outer membrane of the cell. The chain is Acyl-[acyl-carrier-protein]--UDP-N-acetylglucosamine O-acyltransferase from Paraburkholderia phytofirmans (strain DSM 17436 / LMG 22146 / PsJN) (Burkholderia phytofirmans).